A 509-amino-acid polypeptide reads, in one-letter code: ATP synthase subunit alpha, mitochondrial (509 aa).

171–178 contacts ATP; the sequence is GDRQTGKT.

Belongs to the ATPase alpha/beta chains family. In terms of assembly, F-type ATPases have 2 components, CF(1) - the catalytic core - and CF(0) - the membrane proton channel. CF(1) has five subunits: alpha(3), beta(3), gamma(1), delta(1), epsilon(1). CF(0) has three main subunits: a, b and c.

The protein localises to the mitochondrion. It localises to the mitochondrion inner membrane. Functionally, mitochondrial membrane ATP synthase (F(1)F(0) ATP synthase or Complex V) produces ATP from ADP in the presence of a proton gradient across the membrane which is generated by electron transport complexes of the respiratory chain. F-type ATPases consist of two structural domains, F(1) - containing the extramembraneous catalytic core, and F(0) - containing the membrane proton channel, linked together by a central stalk and a peripheral stalk. During catalysis, ATP synthesis in the catalytic domain of F(1) is coupled via a rotary mechanism of the central stalk subunits to proton translocation. Subunits alpha and beta form the catalytic core in F(1). Rotation of the central stalk against the surrounding alpha(3)beta(3) subunits leads to hydrolysis of ATP in three separate catalytic sites on the beta subunits. Subunit alpha does not bear the catalytic high-affinity ATP-binding sites. The sequence is that of ATP synthase subunit alpha, mitochondrial (ATPA) from Nicotiana plumbaginifolia (Leadwort-leaved tobacco).